We begin with the raw amino-acid sequence, 201 residues long: LexA repressor (201 aa).

The segment at residues 29 to 49 (VREICKAVGLSSTSSVHFHLK) is a DNA-binding region (H-T-H motif). Active-site for autocatalytic cleavage activity residues include serine 125 and lysine 162.

The protein belongs to the peptidase S24 family. As to quaternary structure, homodimer.

The enzyme catalyses Hydrolysis of Ala-|-Gly bond in repressor LexA.. Its function is as follows. Represses a number of genes involved in the response to DNA damage (SOS response), including recA and lexA. In the presence of single-stranded DNA, RecA interacts with LexA causing an autocatalytic cleavage which disrupts the DNA-binding part of LexA, leading to derepression of the SOS regulon and eventually DNA repair. This chain is LexA repressor, found in Clostridium botulinum (strain 657 / Type Ba4).